Reading from the N-terminus, the 483-residue chain is uncharacterized protein (483 aa).

The TRAM domain maps to 11-71; sequence RYRKGDIIEL…SRYLEARAIE (61 aa). Positions 84, 90, 93, and 187 each coordinate [4Fe-4S] cluster. S-adenosyl-L-methionine is bound by residues Gln312, Tyr341, Glu362, and Asp412. Cys439 serves as the catalytic Nucleophile.

This sequence belongs to the class I-like SAM-binding methyltransferase superfamily. RNA M5U methyltransferase family.

This is an uncharacterized protein from Chlorobaculum tepidum (strain ATCC 49652 / DSM 12025 / NBRC 103806 / TLS) (Chlorobium tepidum).